Here is a 145-residue protein sequence, read N- to C-terminus: Gene 34.1 protein (145 aa).

Putative excisionase. In Mycobacterium (Mycobacteriophage D29), this protein is Gene 34.1 protein (34.1).